The sequence spans 227 residues: Large ribosomal subunit protein uL10c (227 aa).

The transit peptide at 1–47 (MEATFFTLPSSTSHSYPFSLKSHFNNSLTLPTHPHFKPKSKNLTIRS) directs the protein to the chloroplast.

Belongs to the universal ribosomal protein uL10 family. In terms of assembly, part of the 50S ribosomal subunit.

The protein localises to the plastid. The protein resides in the chloroplast. In terms of biological role, this protein binds directly to 23S ribosomal RNA. The polypeptide is Large ribosomal subunit protein uL10c (RPL10) (Nicotiana tabacum (Common tobacco)).